Consider the following 734-residue polypeptide: Photosystem I P700 chlorophyll a apoprotein A2 (734 aa).

8 consecutive transmembrane segments (helical) span residues I46–A69, L135–Q158, L175–I199, I273–Y291, L330–Y353, A369–I395, A417–H439, and F517–V535. [4Fe-4S] cluster-binding residues include C559 and C568. The next 2 membrane-spanning stretches (helical) occupy residues A575 to W596 and L643 to I665. Chlorophyll a contacts are provided by H654, M662, and Y670. W671 contacts phylloquinone. The chain crosses the membrane as a helical span at residues L707–A727.

This sequence belongs to the PsaA/PsaB family. The PsaA/B heterodimer binds the P700 chlorophyll special pair and subsequent electron acceptors. PSI consists of a core antenna complex that captures photons, and an electron transfer chain that converts photonic excitation into a charge separation. The eukaryotic PSI reaction center is composed of at least 11 subunits. P700 is a chlorophyll a/chlorophyll a' dimer, A0 is one or more chlorophyll a, A1 is one or both phylloquinones and FX is a shared 4Fe-4S iron-sulfur center. is required as a cofactor.

It localises to the plastid. Its subcellular location is the chloroplast thylakoid membrane. It carries out the reaction reduced [plastocyanin] + hnu + oxidized [2Fe-2S]-[ferredoxin] = oxidized [plastocyanin] + reduced [2Fe-2S]-[ferredoxin]. In terms of biological role, psaA and PsaB bind P700, the primary electron donor of photosystem I (PSI), as well as the electron acceptors A0, A1 and FX. PSI is a plastocyanin-ferredoxin oxidoreductase, converting photonic excitation into a charge separation, which transfers an electron from the donor P700 chlorophyll pair to the spectroscopically characterized acceptors A0, A1, FX, FA and FB in turn. Oxidized P700 is reduced on the lumenal side of the thylakoid membrane by plastocyanin. This is Photosystem I P700 chlorophyll a apoprotein A2 from Nicotiana tabacum (Common tobacco).